A 1119-amino-acid polypeptide reads, in one-letter code: Solute carrier family 38 member 10 (1119 aa).

10 helical membrane passes run 4–24, 36–58, 84–104, 120–140, 153–173, 229–249, 272–292, 323–343, 345–365, and 378–398; these read AAAS…GVSV, IVLG…MFLV, LVET…YVVI, VGGT…VLPL, FSAM…LSSL, IFAS…FFGY, MLRV…ILPC, ALTL…PNVE, ILGL…PALI, and VVLW…LSVS. Disordered stretches follow at residues 438 to 691 and 731 to 1071; these read AEDG…EEAG and KEIH…DGVI. Basic and acidic residues-rich tracts occupy residues 439–454, 466–475, 493–522, 544–559, and 592–603; these read EDGR…REEL, PGREDGKEAP, EAHR…ENKP, DSER…EVGK, and AKEDLGPGDRGL. The residue at position 612 (S612) is a Phosphoserine. Pro residues predominate over residues 652–667; that stretch reads PPLPAEKPAPGPGLPP. Composition is skewed to basic and acidic residues over residues 668–677, 731–752, and 763–773; these read EPREQRDVER, KEIH…EVHQ, and EAPEGKARETV. At T772 the chain carries Phosphothreonine. S802 carries the phosphoserine modification. 2 stretches are compositionally biased toward basic and acidic residues: residues 832-841 and 863-876; these read KLRDGQKDAA and PARE…RLAE. Polar residues predominate over residues 880-889; the sequence is GQSQDVTGGS. A phosphoserine mark is found at S889, S965, and S997. 3 stretches are compositionally biased toward basic and acidic residues: residues 975 to 1005, 1012 to 1022, and 1033 to 1042; these read HRLD…RGGE, PRQRPEPELGL, and DNAKPNRDLK.

This sequence belongs to the amino acid/polyamine transporter 2 family.

Its subcellular location is the membrane. It catalyses the reaction L-glutamate(out) = L-glutamate(in). It carries out the reaction L-glutamine(out) = L-glutamine(in). The catalysed reaction is L-alanine(in) = L-alanine(out). The enzyme catalyses L-serine(in) = L-serine(out). It catalyses the reaction L-leucine(in) = L-leucine(out). Functionally, facilitates bidirectional transport of amino acids. May act as a glutamate sensor that regulates glutamate-glutamine cycle and mTOR signaling in the brain. The transport mechanism remains to be elucidated. This is Solute carrier family 38 member 10 from Homo sapiens (Human).